We begin with the raw amino-acid sequence, 206 residues long: Large ribosomal subunit protein uL4 (206 aa).

A disordered region spans residues 46 to 77 (GTRAQKDREQVKHSTKKPFKQKGTGRARAGMT). Basic residues predominate over residues 58 to 70 (HSTKKPFKQKGTG).

It belongs to the universal ribosomal protein uL4 family. As to quaternary structure, part of the 50S ribosomal subunit.

Its function is as follows. One of the primary rRNA binding proteins, this protein initially binds near the 5'-end of the 23S rRNA. It is important during the early stages of 50S assembly. It makes multiple contacts with different domains of the 23S rRNA in the assembled 50S subunit and ribosome. Functionally, forms part of the polypeptide exit tunnel. In Albidiferax ferrireducens (strain ATCC BAA-621 / DSM 15236 / T118) (Rhodoferax ferrireducens), this protein is Large ribosomal subunit protein uL4.